Reading from the N-terminus, the 94-residue chain is Secretoglobin family 1C member 1 (94 aa).

Positions 1-22 are cleaved as a signal peptide; sequence MKGSSALLVALTVLCICGLTRA.

This sequence belongs to the secretoglobin family. As to expression, expressed in the olfactory mucosa.

It localises to the secreted. The sequence is that of Secretoglobin family 1C member 1 (Scgb1c1) from Rattus norvegicus (Rat).